The following is a 1076-amino-acid chain: Protein EXPORTIN 1B (1076 aa).

Positions 37-103 (ADNILRDLKA…KNYISDVIVQ (67 aa)) constitute an Importin N-terminal domain. 11 HEAT repeats span residues 135–171 (AKWK…EVFD), 232–267 (IFES…LNFG), 282–319 (MNQL…FFTS), 475–514 (DTEK…SMVV), 564–601 (KFLK…KCKR), 613–650 (PFVS…AESD), 683–720 (LKEP…IFLD), 757–794 (REIL…DYAR), 799–836 (ARES…CTLE), 895–935 (ETGL…VLTD), and 943–988 (KLHV…YTTK).

The protein belongs to the exportin family. In terms of tissue distribution, present in mature pollen grains, unpollinated pistils, and 2-week-old seedlings.

Its subcellular location is the nucleus. It localises to the nuclear pore complex. It is found in the nucleus membrane. In terms of biological role, receptor for the leucine-rich nuclear export signal (NES). Binds cooperatively to the NES on its target protein and to the small GTPase Ran in its active GTP-bound form. Required for the maternal-to-embryonic transition and during gametophyte development. This chain is Protein EXPORTIN 1B, found in Arabidopsis thaliana (Mouse-ear cress).